The primary structure comprises 230 residues: Orotidine 5'-phosphate decarboxylase (230 aa).

Substrate contacts are provided by residues Asp11, Lys34, 61 to 70 (DLKLHDIPNT), Thr117, Arg179, Gln188, Gly208, and Arg209. Lys63 (proton donor) is an active-site residue.

This sequence belongs to the OMP decarboxylase family. Type 1 subfamily. Homodimer.

The enzyme catalyses orotidine 5'-phosphate + H(+) = UMP + CO2. Its pathway is pyrimidine metabolism; UMP biosynthesis via de novo pathway; UMP from orotate: step 2/2. Functionally, catalyzes the decarboxylation of orotidine 5'-monophosphate (OMP) to uridine 5'-monophosphate (UMP). The protein is Orotidine 5'-phosphate decarboxylase of Streptococcus equi subsp. zooepidemicus (strain H70).